The chain runs to 514 residues: Variant surface glycoprotein ILTAT 1.24 (514 aa).

Residues 1 to 23 form the signal peptide; that stretch reads MVYRNILQLSVLKVLLIVLIVEA. Disulfide bonds link C37/C162 and C143/C204. N-linked (GlcNAc...) asparagine glycosylation is present at N443. Positions 451–476 are disordered; the sequence is GVPVTQTQTAGADTTAEKCKGKGEKD. A compositionally biased stretch (low complexity) spans 455–464; the sequence is TQTQTAGADT. Positions 465–476 are enriched in basic and acidic residues; it reads TAEKCKGKGEKD. D491 carries GPI-anchor amidated aspartate lipidation. The propeptide at 492–514 is removed in mature form; it reads SSILANKQFALSVASAAFVALLF.

It localises to the cell membrane. VSG forms a coat on the surface of the parasite. The trypanosome evades the immune response of the host by expressing a series of antigenically distinct VSGs from an estimated 1000 VSG genes. In Trypanosoma brucei brucei, this protein is Variant surface glycoprotein ILTAT 1.24.